A 286-amino-acid polypeptide reads, in one-letter code: 33 kDa chaperonin (286 aa).

Cystine bridges form between Cys-225-Cys-227 and Cys-258-Cys-261.

Belongs to the HSP33 family. In terms of processing, under oxidizing conditions two disulfide bonds are formed involving the reactive cysteines. Under reducing conditions zinc is bound to the reactive cysteines and the protein is inactive.

It is found in the cytoplasm. Its function is as follows. Redox regulated molecular chaperone. Protects both thermally unfolding and oxidatively damaged proteins from irreversible aggregation. Plays an important role in the bacterial defense system toward oxidative stress. In Shewanella baltica (strain OS223), this protein is 33 kDa chaperonin.